The following is a 372-amino-acid chain: MTFSVQETLFSLLRLNGISGHENSIANVMQHAFEQQAKDVWRDRLGNVVARYGSDKPDALRLMIFAHMDEVGFMVRKIEPSGFLRFERVGGPAQITMPGSIVTLAGRSGDIMGCIGIKAYHFAKGDERTQPPALDKLWIDIGAKDKADAERMGIQVGTPVTLYNPPHCLGNDLVCSKALDDRLGCTALLGVAEALASTPLDIAVFLVASVQEEFNIRGIIPVLRRVRPDLAIGIDITPSCDTPDLQDYSDVRVNHGVGITCLNYHGRGTLAGLITPPRLLRMLETTAHENNIPVQREVAPGVITETGYIQVELDGIPCASLSIPCRYTHSPAEVASLRDLADCIRLLTALANMSPEQFPIEPETGATQEARP.

2 residues coordinate a divalent metal cation: histidine 67 and aspartate 180. Glutamate 212 acts as the Proton acceptor in catalysis. Residues glutamate 213, aspartate 235, and histidine 329 each contribute to the a divalent metal cation site.

The protein belongs to the peptidase M42 family. Requires a divalent metal cation as cofactor.

This is Putative aminopeptidase SgcX (sgcX) from Salmonella typhimurium (strain LT2 / SGSC1412 / ATCC 700720).